The following is a 122-amino-acid chain: Large ribosomal subunit protein uL14 (122 aa).

It belongs to the universal ribosomal protein uL14 family. Part of the 50S ribosomal subunit. Forms a cluster with proteins L3 and L19. In the 70S ribosome, L14 and L19 interact and together make contacts with the 16S rRNA in bridges B5 and B8.

Its function is as follows. Binds to 23S rRNA. Forms part of two intersubunit bridges in the 70S ribosome. The protein is Large ribosomal subunit protein uL14 of Cytophaga hutchinsonii (strain ATCC 33406 / DSM 1761 / CIP 103989 / NBRC 15051 / NCIMB 9469 / D465).